The chain runs to 542 residues: Organic anion transporter 3 (542 aa).

The Cytoplasmic segment spans residues 1–9 (MTFSEILDR). Phosphoserine is present on serine 4. Residues 10 to 30 (VGSMGHFQFLHVAILGLPILN) form a helical membrane-spanning segment. The Extracellular portion of the chain corresponds to 31 to 123 (MANHNLLQIF…LVCNSNKLKE (93 aa)). N-linked (GlcNAc...) asparagine glycans are attached at residues asparagine 86 and asparagine 102. Residues 124–144 (MAQSIFMAGILIGGLVLGDLS) traverse the membrane as a helical segment. The Cytoplasmic segment spans residues 145 to 154 (DRFGRRPILT). The helical transmembrane segment at 155-175 (CSYLLLAASGSGAAFSPTFPI) threads the bilayer. Position 176 (tyrosine 176) is a topological domain, extracellular. A helical membrane pass occupies residues 177 to 197 (MVFRFLCGFGISGITLSTVIL). The Cytoplasmic segment spans residues 198–212 (NVEWVPTRMRAIMST). A helical membrane pass occupies residues 213-233 (ALGYCYTFGQFILPGLAYAIP). The Extracellular portion of the chain corresponds to 234-236 (QWR). A helical transmembrane segment spans residues 237–257 (WLQLTVSIPFFVFFLSSWWTP). Topologically, residues 258-327 (ESIRWLVLSG…FRIPMLRRMT (70 aa)) are cytoplasmic. A helical membrane pass occupies residues 328 to 348 (FCLSLAWFATGFAYYSLAMGV). The Extracellular segment spans residues 349-354 (EEFGVN). The helical transmembrane segment at 355 to 375 (LYILQIIFGGVDVPAKFITIL) threads the bilayer. Residues 376-386 (SLSYLGRHTTQ) are Cytoplasmic-facing. Residues 387–407 (AAALLLAGGAILALTFVPLDL) traverse the membrane as a helical segment. The Extracellular portion of the chain corresponds to 408–411 (QTVR). Residues 412-432 (TVLAVFGKGCLSSSFSCLFLY) form a helical membrane-spanning segment. Residues 433–471 (TSELYPTVIRQTGMGVSNLWTRVGSMVSPLVKITGEVQP) are Cytoplasmic-facing. Residues 472–492 (FIPNIIYGITALLGGSAALFL) traverse the membrane as a helical segment. The Extracellular segment spans residues 493–542 (PETLNQPLPETIEDLENWSLRAKKPKQEPEVEKASQRIPLQPHGPGLGSS). Positions 515–542 (KKPKQEPEVEKASQRIPLQPHGPGLGSS) are disordered. Over residues 517–527 (PKQEPEVEKAS) the composition is skewed to basic and acidic residues.

It belongs to the major facilitator (TC 2.A.1) superfamily. Organic cation transporter (TC 2.A.1.19) family. In terms of tissue distribution, strongly expressed in kidney. Weaker expression in brain and skeletal muscle. Expressed in adrenal glands.

The protein resides in the basolateral cell membrane. It catalyses the reaction estrone 3-sulfate(out) + glutarate(in) = estrone 3-sulfate(in) + glutarate(out). The catalysed reaction is estrone 3-sulfate(in) + 2-oxoglutarate(out) = estrone 3-sulfate(out) + 2-oxoglutarate(in). The enzyme catalyses glutarate(in) + 2-oxoglutarate(out) = glutarate(out) + 2-oxoglutarate(in). It carries out the reaction urate(in) + 2-oxoglutarate(out) = urate(out) + 2-oxoglutarate(in). It catalyses the reaction taurocholate(out) + glutarate(in) = taurocholate(in) + glutarate(out). The catalysed reaction is dehydroepiandrosterone 3-sulfate(out) + glutarate(in) = dehydroepiandrosterone 3-sulfate(in) + glutarate(out). The enzyme catalyses prostaglandin F2alpha(out) + glutarate(in) = prostaglandin F2alpha(in) + glutarate(out). It carries out the reaction prostaglandin F2alpha(out) + 2-oxoglutarate(in) = prostaglandin F2alpha(in) + 2-oxoglutarate(out). It catalyses the reaction (R)-carnitine(out) + 2-oxoglutarate(in) = (R)-carnitine(in) + 2-oxoglutarate(out). The catalysed reaction is glutarate(in) + (R)-carnitine(out) = glutarate(out) + (R)-carnitine(in). The enzyme catalyses prostaglandin E2(out) + 2-oxoglutarate(in) = prostaglandin E2(in) + 2-oxoglutarate(out). It carries out the reaction prostaglandin E2(out) + glutarate(in) = prostaglandin E2(in) + glutarate(out). It catalyses the reaction urate(in) + glutarate(out) = urate(out) + glutarate(in). The catalysed reaction is taurocholate(out) + 2-oxoglutarate(in) = taurocholate(in) + 2-oxoglutarate(out). The enzyme catalyses dehydroepiandrosterone 3-sulfate(out) + 2-oxoglutarate(in) = dehydroepiandrosterone 3-sulfate(in) + 2-oxoglutarate(out). It carries out the reaction kynurenate(out) + a dicarboxylate(in) = kynurenate(in) + a dicarboxylate(out). It catalyses the reaction (indol-3-yl)acetate(out) + a dicarboxylate(in) = (indol-3-yl)acetate(in) + a dicarboxylate(out). The catalysed reaction is indoxyl sulfate(out) + a dicarboxylate(in) = indoxyl sulfate(in) + a dicarboxylate(out). The enzyme catalyses N-benzoylglycine(out) + a dicarboxylate(in) = N-benzoylglycine(in) + a dicarboxylate(out). It carries out the reaction 3-carboxy-4-methyl-5-propyl-2-furanpropanoate(out) + a dicarboxylate(in) = 3-carboxy-4-methyl-5-propyl-2-furanpropanoate(in) + a dicarboxylate(out). It catalyses the reaction (6R)-L-erythro-5,6,7,8-tetrahydrobiopterin(out) + a dicarboxylate(in) = (6R)-L-erythro-5,6,7,8-tetrahydrobiopterin(in) + a dicarboxylate(out). The catalysed reaction is L-erythro-7,8-dihydrobiopterin(out) + a dicarboxylate(in) = L-erythro-7,8-dihydrobiopterin(in) + a dicarboxylate(out). The enzyme catalyses L-sepiapterin(out) + a dicarboxylate(in) = L-sepiapterin(in) + a dicarboxylate(out). Its function is as follows. Functions as an organic anion/dicarboxylate exchanger that couples organic anion uptake indirectly to the sodium gradient. Transports organic anions such as estrone 3-sulfate (E1S) and urate in exchange for dicarboxylates such as glutarate or ketoglutarate (2-oxoglutarate). Plays an important role in the excretion of endogenous and exogenous organic anions, especially from the kidney and the brain. E1S transport is pH- and chloride-dependent and may also involve E1S/cGMP exchange. Responsible for the transport of prostaglandin E2 (PGE2) and prostaglandin F2(alpha) (PGF2(alpha)) in the basolateral side of the renal tubule. Involved in the transport of neuroactive tryptophan metabolites kynurenate and xanthurenate. Functions as a biopterin transporters involved in the uptake and the secretion of coenzymes tetrahydrobiopterin (BH4), dihydrobiopterin (BH2) and sepiapterin to urine, thereby determining baseline levels of blood biopterins. May be involved in the basolateral transport of steviol, a metabolite of the popular sugar substitute stevioside. May participate in the detoxification/ renal excretion of drugs and xenobiotics, such as the histamine H(2)-receptor antagonists fexofenadine and cimetidine, the antibiotic benzylpenicillin (PCG), the anionic herbicide 2,4-dichloro-phenoxyacetate (2,4-D), the diagnostic agent p-aminohippurate (PAH), the antiviral acyclovir (ACV), and the mycotoxin ochratoxin (OTA), by transporting these exogenous organic anions across the cell membrane in exchange for dicarboxylates such as 2-oxoglutarate. Contributes to the renal uptake of potent uremic toxins (indoxyl sulfate (IS), indole acetate (IA), hippurate/N-benzoylglycine (HA) and 3-carboxy-4-methyl-5-propyl-2-furanpropionate (CMPF)), pravastatin, PCG, E1S and dehydroepiandrosterone sulfate (DHEAS), and is partly involved in the renal uptake of temocaprilat (an angiotensin-converting enzyme (ACE) inhibitor). May contribute to the release of cortisol in the adrenals. Involved in one of the detoxification systems on the choroid plexus (CP), removes substrates such as E1S or taurocholate (TC), PCG, 2,4-D and PAH, from the cerebrospinal fluid (CSF) to the blood for eventual excretion in urine and bile. Also contributes to the uptake of several other organic compounds such as the prostanoids prostaglandin E(2) and prostaglandin F(2-alpha), L-carnitine, and the therapeutic drugs allopurinol, 6-mercaptopurine (6-MP) and 5-fluorouracil (5-FU). Mediates the transport of PAH, PCG, and the statins pravastatin and pitavastatin, from the cerebrum into the blood circulation across the blood-brain barrier (BBB). In summary, plays a role in the efflux of drugs and xenobiotics, helping reduce their undesired toxicological effects on the body. This chain is Organic anion transporter 3, found in Homo sapiens (Human).